Consider the following 457-residue polypeptide: Chromosomal replication initiator protein DnaA (457 aa).

Positions 1-90 are domain I, interacts with DnaA modulators; it reads MDTNNNIEKE…HSVDVRIEVA (90 aa). A domain II region spans residues 91–112; the sequence is PKIQINAQSNINYKAIKTSVKD. Residues 113 to 323 are domain III, AAA+ region; the sequence is SYTFENFVVG…GAIIKISVNA (211 aa). ATP is bound by residues Gly-153, Gly-155, Lys-156, and Thr-157. Residues 324 to 457 form a domain IV, binds dsDNA region; it reads NLMNASIDLN…DKKTAFNSSE (134 aa).

It belongs to the DnaA family. In terms of assembly, oligomerizes as a right-handed, spiral filament on DNA at oriC. Interacts via domain I with HobA. In a crystal with domains I and II of DnaA HobA forms tetramers with DnaA fragments bound at the dimer interface of the tetramer.

The protein localises to the cytoplasm. It is found in the cell inner membrane. Its function is as follows. Plays an essential role in the initiation and regulation of chromosomal replication. ATP-DnaA binds to the origin of replication (oriC) to initiate formation of the DNA replication initiation complex once per cell cycle. Binds the DnaA box (a 9 base pair repeat at the origin) and separates the double-stranded (ds)DNA. Forms a right-handed helical filament on oriC DNA; dsDNA binds to the exterior of the filament while single-stranded (ss)DNA is stabiized in the filament's interior. The ATP-DnaA-oriC complex binds and stabilizes one strand of the AT-rich DNA unwinding element (DUE), permitting loading of DNA polymerase. After initiation quickly degrades to an ADP-DnaA complex that is not apt for DNA replication. Binds acidic phospholipids. The DnaA box is 5'-TTATC[CA]A[CA]A-3' in this bacterium cycle. Multiple discrete DnaA-oriC complexes can be seen as DnaA levels increase. Binding of DnaA to oriC is increased by HobA; some chi-type structures can be seen by electron microscopy. Strand separation requires the DnaA boxes and adjacent DnaA-trio motifs but works equally well with ADP or ATP. This is Chromosomal replication initiator protein DnaA from Helicobacter pylori (strain ATCC 700392 / 26695) (Campylobacter pylori).